We begin with the raw amino-acid sequence, 147 residues long: Large ribosomal subunit protein uL22c (147 aa).

Belongs to the universal ribosomal protein uL22 family. In terms of assembly, part of the 50S ribosomal subunit.

It localises to the plastid. Its subcellular location is the chloroplast. Its function is as follows. This protein binds specifically to 23S rRNA. In terms of biological role, the globular domain of the protein is located near the polypeptide exit tunnel on the outside of the subunit, while an extended beta-hairpin is found that lines the wall of the exit tunnel in the center of the 70S ribosome. The polypeptide is Large ribosomal subunit protein uL22c (rpl22) (Lolium perenne (Perennial ryegrass)).